The primary structure comprises 905 residues: Protein translocase subunit SecA (905 aa).

ATP contacts are provided by residues Gln89, 107–111, and Asp502; that span reads GEGKT. Positions 889, 891, 900, and 901 each coordinate Zn(2+).

This sequence belongs to the SecA family. Monomer and homodimer. Part of the essential Sec protein translocation apparatus which comprises SecA, SecYEG and auxiliary proteins SecDF-YajC and YidC. The cofactor is Zn(2+).

It localises to the cell inner membrane. The protein localises to the cytoplasm. The catalysed reaction is ATP + H2O + cellular proteinSide 1 = ADP + phosphate + cellular proteinSide 2.. In terms of biological role, part of the Sec protein translocase complex. Interacts with the SecYEG preprotein conducting channel. Has a central role in coupling the hydrolysis of ATP to the transfer of proteins into and across the cell membrane, serving both as a receptor for the preprotein-SecB complex and as an ATP-driven molecular motor driving the stepwise translocation of polypeptide chains across the membrane. This is Protein translocase subunit SecA from Bartonella tribocorum (strain CIP 105476 / IBS 506).